Reading from the N-terminus, the 122-residue chain is Proteasome assembly chaperone 3 (122 aa).

M1 is modified (N-acetylmethionine).

It belongs to the PSMG3 family. As to quaternary structure, homodimer. Interacts with PSMG4. Interacts directly with alpha and beta subunits of the 20S proteasome but dissociates before the formation of half-proteasomes, probably upon recruitment of POMP.

Functionally, chaperone protein which promotes assembly of the 20S proteasome. May cooperate with PSMG1-PSMG2 heterodimers to orchestrate the correct assembly of proteasomes. In Homo sapiens (Human), this protein is Proteasome assembly chaperone 3.